A 1322-amino-acid polypeptide reads, in one-letter code: WD repeat-containing protein 17 (1322 aa).

WD repeat units follow at residues 81–121, 123–164, 171–211, 221–261, and 266–307; these read EHKK…VIAK, DSTK…SGVI, SFLS…QKHV, DEED…CITT, and SAAA…PIDN. The disordered stretch occupies residues 328-352; it reads KFSVQSPTKNHYTSSTSEAVPPPTL. A compositionally biased stretch (polar residues) spans 330 to 345; that stretch reads SVQSPTKNHYTSSTSE. WD repeat units lie at residues 391–431, 434–474, 478–518, 519–559, 564–604, 607–647, and 650–690; these read GHVE…AVYT, GNEG…IIQR, HGTN…LHKY, KHPA…DQPL, GHTA…CINI, GHTA…CVDT, and DHGA…TPVQ.

The protein is WD repeat-containing protein 17 (WDR17) of Homo sapiens (Human).